The sequence spans 350 residues: Heat-inducible transcription repressor HrcA (350 aa).

This sequence belongs to the HrcA family.

Functionally, negative regulator of class I heat shock genes (grpE-dnaK-dnaJ and groELS operons). Prevents heat-shock induction of these operons. This chain is Heat-inducible transcription repressor HrcA, found in Xanthomonas axonopodis pv. citri (strain 306).